Consider the following 71-residue polypeptide: Conotoxin ba5b (71 aa).

Residues 1 to 19 (MLCLPVFITLLLLVSPSAA) form the signal peptide. The propeptide occupies 20-52 (LPVESELQRDLTQDSPKDFRIREPLLLSKMFDR). 2 disulfide bridges follow: C54–C63 and C55–C64. C64 is subject to Cysteine amide. Residues 66–71 (RYQRGS) constitute a propeptide that is removed on maturation.

This sequence belongs to the conotoxin T superfamily. In terms of tissue distribution, expressed by the venom duct.

It localises to the secreted. The protein is Conotoxin ba5b of Conus bayani (Bayan's cone).